Reading from the N-terminus, the 320-residue chain is Sliding-clamp-loader large subunit (320 aa).

ATP is bound by residues glutamate 12–tyrosine 15, isoleucine 24, glycine 53–threonine 58, and arginine 205.

This sequence belongs to the Tevenvirinae sliding-clamp-loader large subunit family. In terms of assembly, the sliding-clamp-loader consists of 4 large subunits and 1 small subunit. Interacts with the sliding clamp; this interaction allows the sliding-clamp-loader to open the sliding clamp. Part of the replicase complex that includes the DNA polymerase, the polymerase clamp, the clamp loader complex, the single-stranded DNA binding protein, the primase, the helicase and the helicase assembly factor.

In terms of biological role, forms the sliding-clamp-loader together with the small subunit. Functions as an ATPase enzyme. The clamp loader holds the clamp in an open conformation and places it onto the DNA. 4 ATP molecules must bind to the sliding-clamp-loader before the latter can open the sliding clamp. ATP hydrolysis triggers the detachment of the sliding clamp from the sliding-clamp-loader, freeing the sliding clamp to track along DNA. This Escherichia phage RB69 (Bacteriophage RB69) protein is Sliding-clamp-loader large subunit (44).